The primary structure comprises 178 residues: Ribosome maturation factor RimM (178 aa).

A PRC barrel domain is found at 101–178 (EGEFYWYQLQ…EMRVDWDADF (78 aa)).

The protein belongs to the RimM family. Binds ribosomal protein uS19.

The protein localises to the cytoplasm. In terms of biological role, an accessory protein needed during the final step in the assembly of 30S ribosomal subunit, possibly for assembly of the head region. Essential for efficient processing of 16S rRNA. May be needed both before and after RbfA during the maturation of 16S rRNA. It has affinity for free ribosomal 30S subunits but not for 70S ribosomes. The protein is Ribosome maturation factor RimM of Ectopseudomonas mendocina (strain ymp) (Pseudomonas mendocina).